The sequence spans 67 residues: DNA-directed RNA polymerase subunit omega (67 aa).

It belongs to the RNA polymerase subunit omega family. The RNAP catalytic core consists of 2 alpha, 1 beta, 1 beta' and 1 omega subunit. When a sigma factor is associated with the core the holoenzyme is formed, which can initiate transcription.

The catalysed reaction is RNA(n) + a ribonucleoside 5'-triphosphate = RNA(n+1) + diphosphate. Functionally, promotes RNA polymerase assembly. Latches the N- and C-terminal regions of the beta' subunit thereby facilitating its interaction with the beta and alpha subunits. This Cupriavidus metallidurans (strain ATCC 43123 / DSM 2839 / NBRC 102507 / CH34) (Ralstonia metallidurans) protein is DNA-directed RNA polymerase subunit omega.